The primary structure comprises 541 residues: Arginine-containing cyclodipeptide synthase avaA (541 aa).

The Conserved DDXXE motif motif lies at 428–432 (DDIAE).

The protein belongs to the arginine-containing cyclodipeptide synthase family.

The catalysed reaction is L-tryptophyl-tRNA(Trp) + L-arginyl-tRNA(Arg) = cyclo(L-arginyl-L-tryptophyl) + tRNA(Trp) + tRNA(Arg) + H(+). Its pathway is secondary metabolite biosynthesis. Functionally, arginine-containing cyclodipeptide synthase; part of the cluster that mediates the biosynthesis of a highly modified cyclo-arginine-tryptophan dipeptide (cRW). Within the pathway, avaA acts as the scaffold-generating enzyme and is responsible for formation of the cyclo-Arg-Trp diketopiperazine (cRW) from L-arginyl-tRNA(Arg) + L-tryptophanyl-tRNA(Trp). AvaB then acts as a multifunctional flavoenzyme that is responsible for generating the cyclo-Arg-formylkynurenine DKP, which can be deformylated by avaC. AvaB then catalyzes an additional N-oxidation followed by cyclization and dehydration. The next step is an N-acetylation of the guanidine group catalyzed by the arginine N-acetyltransferase AvaD. The role of the additional enzymes identified within the ava cluster still have to be determined. The sequence is that of Arginine-containing cyclodipeptide synthase avaA from Aspergillus versicolor.